We begin with the raw amino-acid sequence, 317 residues long: Transaldolase (317 aa).

K132 functions as the Schiff-base intermediate with substrate in the catalytic mechanism.

The protein belongs to the transaldolase family. Type 1 subfamily. As to quaternary structure, homodimer.

Its subcellular location is the cytoplasm. It catalyses the reaction D-sedoheptulose 7-phosphate + D-glyceraldehyde 3-phosphate = D-erythrose 4-phosphate + beta-D-fructose 6-phosphate. It functions in the pathway carbohydrate degradation; pentose phosphate pathway; D-glyceraldehyde 3-phosphate and beta-D-fructose 6-phosphate from D-ribose 5-phosphate and D-xylulose 5-phosphate (non-oxidative stage): step 2/3. Transaldolase is important for the balance of metabolites in the pentose-phosphate pathway. This Escherichia coli O104:H4 (strain 2009EL-2071) protein is Transaldolase (talB).